An 81-amino-acid polypeptide reads, in one-letter code: MNPTVAAASVIAAALAVGLAAIGPGFGQGNASGEAVSGIARQPEAEGKIRGTLLLSLAFMESLTIYGLVIALVLLFANPFA.

Transmembrane regions (helical) follow at residues 6–26 and 57–77; these read AAAS…GPGF and LAFM…LLFA.

It belongs to the ATPase C chain family. As to quaternary structure, F-type ATPases have 2 components, F(1) - the catalytic core - and F(0) - the membrane proton channel. F(1) has five subunits: alpha(3), beta(3), gamma(1), delta(1), epsilon(1). F(0) has four main subunits: a(1), b(1), b'(1) and c(10-14). The alpha and beta chains form an alternating ring which encloses part of the gamma chain. F(1) is attached to F(0) by a central stalk formed by the gamma and epsilon chains, while a peripheral stalk is formed by the delta, b and b' chains.

Its subcellular location is the cellular thylakoid membrane. Functionally, f(1)F(0) ATP synthase produces ATP from ADP in the presence of a proton or sodium gradient. F-type ATPases consist of two structural domains, F(1) containing the extramembraneous catalytic core and F(0) containing the membrane proton channel, linked together by a central stalk and a peripheral stalk. During catalysis, ATP synthesis in the catalytic domain of F(1) is coupled via a rotary mechanism of the central stalk subunits to proton translocation. Its function is as follows. Key component of the F(0) channel; it plays a direct role in translocation across the membrane. A homomeric c-ring of between 10-14 subunits forms the central stalk rotor element with the F(1) delta and epsilon subunits. The chain is ATP synthase subunit c from Rippkaea orientalis (strain PCC 8801 / RF-1) (Cyanothece sp. (strain PCC 8801)).